Consider the following 1255-residue polypeptide: Structural polyprotein (1255 aa).

Positions 1–33 are necessary for nucleocapsid assembly and virus assembly; it reads MFPFQPMYPMQPMPYRNPFAAPRRPWFPRTDPF. Residues 33 to 68 form a host transcription inhibition region; the sequence is FLAMQVQELTRSMANLTFKQRREAPPEGPPAKKPKR. Residues 41-48 carry the Supraphysiological nuclear export signal motif; it reads LTRSMANL. The segment at 44–119 is disordered; that stretch reads SMANLTFKQR…KKPGKRQRMV (76 aa). N47 is a glycosylation site (N-linked (GlcNAc...) asparagine; by host). A Nuclear localization signal motif is present at residues 64–68; that stretch reads KKPKR. Residues 80 to 92 are compositionally biased toward basic residues; the sequence is GKKKKNQGKKKAK. The segment at 91-127 is binding to the viral RNA; that stretch reads AKTGPPNPKAQNGNKKKTNKKPGKRQRMVMKLESDKT. A phosphothreonine mark is found at T93 and T108. The segment covering 104–118 has biased composition (basic residues); that stretch reads NKKKTNKKPGKRQRM. Positions 112 to 126 are ribosome-binding; the sequence is PGKRQRMVMKLESDK. Position 124 is a phosphoserine (S124). Residues 126 to 275 form the Peptidase S3 domain; the sequence is KTFPIMLEGK…KYTPENCEQW (150 aa). T127 is modified (phosphothreonine). Catalysis depends on H152, which acts as the Charge relay system. Residues 168-173 are interaction with spike glycoprotein E2; sequence KKASKY. Residues D174 and S226 each act as charge relay system in the active site. The segment at 260–264 is interaction with spike glycoprotein E2; it reads EKGVT. Residues 276–287 are functions as an uncleaved signal peptide for the precursor of protein E3/E2; sequence SLVTTMCLLANV. Residues 276-701 lie on the Extracellular side of the membrane; it reads SLVTTMCLLA…HYYHRYPMST (426 aa). Disulfide bonds link C282–C291, C353–C457, C356–C361, C424–C438, C485–C600, C534–C560, and C536–C554. Residue N286 is glycosylated (N-linked (GlcNAc...) asparagine; by host). An N-linked (GlcNAc...) asparagine; by host glycan is attached at N652. A helical membrane pass occupies residues 702–722; that stretch reads ILGLSICAAIVTVSIAASTWL. Residues 723–757 are Cytoplasmic-facing; it reads LCKSRVSCLTPYRLTPNARMPLCLAVLCCARTARA. Residues 725–729 are interaction with the capsid protein; it reads KSRVS. S-palmitoyl cysteine; by host attachment occurs at residues C730, C750, and C751. Residues 730–750 form a transient transmembrane before p62-6K protein processing region; the sequence is CLTPYRLTPNARMPLCLAVLC. C730 and C751 are joined by a disulfide. Residues 758-772 are Extracellular-facing; sequence ETTWESLDHLWNNNQ. The chain crosses the membrane as a helical span at residues 773–793; sequence QMFWIQLLIPLAALIVVTRLL. A topological domain (cytoplasmic) is located at residue R794. The helical transmembrane segment at 795–815 threads the bilayer; sequence CVCCVVPFLVVAGAAGAGAYE. The Extracellular segment spans residues 816–1225; the sequence is HATTMPSQAG…SKTAWTWLTS (410 aa). Cystine bridges form between C862–C927, C875–C907, C876–C909, and C881–C891. Residues 897-914 form an E1 fusion peptide loop region; the sequence is VYPFMWGGAYCFCDTENT. 2 N-linked (GlcNAc...) asparagine; by host glycosylation sites follow: N947 and N1083. 4 disulfides stabilise this stretch: C1072-C1084, C1114-C1189, C1119-C1193, and C1141-C1183. The helical transmembrane segment at 1226–1246 threads the bilayer; it reads LLGGSAVIIIIGLVLATIVAM. At 1247 to 1255 the chain is on the cytoplasmic side; the sequence is YVLTNQKHN.

Homodimer. Homomultimer. Interacts with host karyopherin KPNA4; this interaction allows the nuclear import of the viral capsid protein. Interacts with spike glycoprotein E2. Interacts with host IRAK1; the interaction leads to inhibition of IRAK1-dependent signaling. Part of a tetrameric complex composed of host CRM1, host importin alpha/beta dimer and the viral capsid; this complex blocks the receptor-mediated transport through the nuclear pore. Interacts with host phosphatase PPP1CA; this interaction dephosphorylates the capsid protein, which increases its ability to bind to the viral genome. As to quaternary structure, the precursor of protein E3/E2 and E1 form a heterodimer shortly after synthesis. In terms of assembly, interacts with spike glycoprotein E2. The precursor of protein E3/E2 and E1 form a heterodimer shortly after synthesis. Processing of the precursor of protein E3/E2 into E2 and E3 results in a heterodimer of the spike glycoproteins E2 and E1. Spike at virion surface are constituted of three E2-E1 heterodimers. After target cell attachment and endocytosis, E1 change conformation to form homotrimers. Interacts with 6K protein. Interacts with host LDLRAD3; this interaction mediates viral entry to the host cell. Interacts with spike glycoprotein E1. Processing of the precursor of protein E3/E2 into E2 and E3 results in a heterodimer of the spike glycoproteins E2 and E1. Spike at virion surface are constituted of a trimer of E2-E1 heterodimers. Interacts with 6K protein. Interacts with host LDLRAD3; this interaction mediates viral entry to the host cell. As to quaternary structure, oligomer. Interacts with spike glycoprotein E1. Interacts with spike glycoprotein E2. Post-translationally, structural polyprotein: Specific enzymatic cleavages in vivo yield mature proteins. Capsid protein is auto-cleaved during polyprotein translation, unmasking a signal peptide at the N-terminus of the precursor of E3/E2. The remaining polyprotein is then targeted to the host endoplasmic reticulum, where host signal peptidase cleaves it into pE2, 6K and E1 proteins. pE2 is further processed to mature E3 and E2 by host furin in trans-Golgi vesicle. In terms of processing, phosphorylated on serine and threonine residues. Palmitoylated via thioester bonds. These palmitoylations may induce disruption of the C-terminus transmembrane. This would result in the reorientation of E2 C-terminus from lumenal to cytoplasmic side. Post-translationally, N-glycosylated. In terms of processing, palmitoylated via thioester bonds.

Its subcellular location is the virion. It localises to the host cytoplasm. It is found in the host cell membrane. The protein resides in the host nucleus. The protein localises to the virion membrane. Its subcellular location is the host Golgi apparatus. It localises to the host trans-Golgi network. It is found in the host endoplasmic reticulum. The catalysed reaction is Autocatalytic release of the core protein from the N-terminus of the togavirus structural polyprotein by hydrolysis of a -Trp-|-Ser- bond.. Forms an icosahedral capsid with a T=4 symmetry composed of 240 copies of the capsid protein surrounded by a lipid membrane through which penetrate 80 spikes composed of trimers of E1-E2 heterodimers. The capsid protein binds to the viral RNA genome at a site adjacent to a ribosome binding site for viral genome translation following genome release. Possesses a protease activity that results in its autocatalytic cleavage from the nascent structural protein. Following its self-cleavage, the capsid protein transiently associates with ribosomes, and within several minutes the protein binds to viral RNA and rapidly assembles into icosahedric core particles. The resulting nucleocapsid eventually associates with the cytoplasmic domain of the spike glycoprotein E2 at the cell membrane, leading to budding and formation of mature virions. In case of infection, new virions attach to target cells and after clathrin-mediated endocytosis their membrane fuses with the host endosomal membrane. This leads to the release of the nucleocapsid into the cytoplasm, followed by an uncoating event necessary for the genomic RNA to become accessible. The uncoating might be triggered by the interaction of capsid proteins with ribosomes. Binding of ribosomes would release the genomic RNA since the same region is genomic RNA-binding and ribosome-binding. Specifically inhibits interleukin-1 receptor-associated kinase 1/IRAK1-dependent signaling during viral entry, representing a means by which the alphaviruses may evade innate immune detection and activation prior to viral gene expression. Inhibits host transcription. Forms a tetrameric complex with XPO1/CRM1 and the nuclear import receptor importin. This complex blocks the central channel of host nuclear pores thereby inhibiting the receptor-mediated nuclear transport and thus the host mRNA and rRNA transcription. The inhibition of transcription is linked to a cytopathic effect on the host cell. Its function is as follows. Provides the signal sequence for the translocation of the precursor of protein E3/E2 to the host endoplasmic reticulum. Furin-cleaved E3 remains associated with spike glycoprotein E1 and mediates pH protection of the latter during the transport via the secretory pathway. After virion release from the host cell, the assembly protein E3 is gradually released in the extracellular space. In terms of biological role, plays a role in viral attachment to target host cell, by binding to the cell receptor LDLRAD3. Synthesized as a p62 precursor which is processed by furin at the cell membrane just before virion budding, giving rise to E2-E1 heterodimer. The p62-E1 heterodimer is stable, whereas E2-E1 is unstable and dissociate at low pH. p62 is processed at the last step, presumably to avoid E1 fusion activation before its final export to cell surface. E2 C-terminus contains a transitory transmembrane that would be disrupted by palmitoylation, resulting in reorientation of the C-terminal tail from lumenal to cytoplasmic side. This step is critical since E2 C-terminus is involved in budding by interacting with capsid proteins. This release of E2 C-terminus in cytoplasm occurs lately in protein export, and precludes premature assembly of particles at the endoplasmic reticulum membrane. Functionally, acts as a viroporin that participates in virus glycoprotein processing and transport to the plasma membrane, cell permeabilization and budding of viral particles. Disrupts the calcium homeostasis of the cell, probably at the endoplasmic reticulum level. This leads to cytoplasmic calcium elevation. Because of its lipophilic properties, the 6K protein is postulated to influence the selection of lipids that interact with the transmembrane domains of the glycoproteins, which, in turn, affects the deformability of the bilayer required for the extreme curvature that occurs as budding proceeds. Present in low amount in virions, about 3% compared to viral glycoproteins. Class II viral fusion protein. Fusion activity is inactive as long as E1 is bound to E2 in mature virion. After virus attachment to cell receptor LDLRAD3 and endocytosis, acidification of the endosome induce dissociation of E1/E2 heterodimer and concomitant trimerization of the E1 subunits. This E1 trimer is fusion active, and promotes release of viral nucleocapsid in cytoplasm after endosome and viral membrane fusion. Efficient fusion requires the presence of cholesterol and sphingolipid in the target membrane. The protein is Structural polyprotein of Venezuelan equine encephalitis virus (strain 3880) (VEEV).